The sequence spans 555 residues: Formate--tetrahydrofolate ligase (555 aa).

ATP is bound at residue 65-72 (TPAGEGKS).

This sequence belongs to the formate--tetrahydrofolate ligase family.

The catalysed reaction is (6S)-5,6,7,8-tetrahydrofolate + formate + ATP = (6R)-10-formyltetrahydrofolate + ADP + phosphate. It functions in the pathway one-carbon metabolism; tetrahydrofolate interconversion. The protein is Formate--tetrahydrofolate ligase of Lactococcus lactis subsp. lactis (strain IL1403) (Streptococcus lactis).